Here is an 83-residue protein sequence, read N- to C-terminus: RNA-binding protein Hfq (83 aa).

Residues 9-69 (DQLLNTARKE…ISTIIPAKPI (61 aa)) form the Sm domain.

Belongs to the Hfq family. Homohexamer.

RNA chaperone that binds small regulatory RNA (sRNAs) and mRNAs to facilitate mRNA translational regulation in response to envelope stress, environmental stress and changes in metabolite concentrations. Also binds with high specificity to tRNAs. This is RNA-binding protein Hfq from Leptospira biflexa serovar Patoc (strain Patoc 1 / Ames).